We begin with the raw amino-acid sequence, 1121 residues long: MEQVPSAGRLVQITVTEGYDLKGFKGDTPVTFIRAEFNQVVLGDSAKITVSPEGSAKYNFTSSFEFNPEGGITSDDLAHKPVFLTVTEVLPKEKKQKEEKTLILGQAVVDLLPLLEGQSSFQTTVPLHPVQGSPLETPRSSAKQCSLEVKVLVAEPLLTTAQISGGNLLKVTLEAAYSVPESFIPTGPGQNYMVGLQVPSLGEKDYPILFKNGTLKLGGEREPVPRPKKWPIANILAPGANNIPDAFIVGGPYEEEEGELNHPEDSEFRNQAECIKKRIIWDLESRCYLDPSAVVSFQKRIADCRLWPVEITRVPLVTIPKGKAGKTEKTDEEAQLSFHGVAYVNMVPLLYPGVKRIRGAFHVYPYLDSVVHEKTKCLLSLFRDIGHHLIHNNKIGGINSLLSKQAVSKNLKEDKPVKEKDIDGRPRPGDVQAPSIKSQSSDTPLEGEPPLSHNPEGQQYVEAGTYIVLEIQLDKALVPKRMPEELARRVKEMIPPRPPLTRRTGGAQKAMSDYHIQIKNISRAILDEYYRMFGKQVAKLESDMDSETLEEQKCQLSYELNCSGKYFAFKEQLKHAVVKIVRDKYLKTTSFESQEELQTFISELYVFLVDQMHVALNQTMPDDVQGTVATIYTSSEQLQLFAFEAEVNENFEMAAAYYKERLVREPQNLDHWLDYGAFCLLTEDNIKAQECFQKALSLNQSHIHSLLLCGVLAVLLENYEQAEIFFEDATCLEPTNVVAWTLLGLYYEIQNNDIRMEMAFHEASKQLQARMLQAQVTKQKSTGVEDTEERGKRESSLGPWGITNGSATAIKVEAPAGPGAALSILDKFLEESSKLQSDSQEPILTTQTWDPSISQKPSNTFIKEIPTKKEASKCQDSSALLHPGLHYGVSQTTTIFMETIHFLMKVKAVQYVHRVLAHELLCPQGGPSCEYYLVLAQTHILKKNFAKAEEYLQQAAQMDYLNPNVWGLKGHLYFLSGNHSEAKACYERTISFVVDASEMHFIFLRLGLIYLEEKEYEKAKKTYMQACKRSPSCLTWLGLGIACYRLEELTEAEDALSEANALNNYNAEVWAYLALVCLKVGRQLEAEQAYKYMIKLKLKDEALLAEIHTLQETVGFGNPSF.

Basic and acidic residues predominate over residues 410 to 428 (NLKEDKPVKEKDIDGRPRP). Residues 410-457 (NLKEDKPVKEKDIDGRPRPGDVQAPSIKSQSSDTPLEGEPPLSHNPEG) form a disordered region. 3 TPR repeats span residues 635 to 668 (SEQLQLFAFEAEVNENFEMAAAYYKERLVREPQN), 669 to 702 (LDHWLDYGAFCLLTEDNIKAQECFQKALSLNQSH), and 704 to 736 (HSLLLCGVLAVLLENYEQAEIFFEDATCLEPTN). 2 disordered regions span residues 778–802 (KQKSTGVEDTEERGKRESSLGPWGI) and 836–858 (QSDSQEPILTTQTWDPSISQKPS). 5 TPR repeats span residues 929 to 962 (CEYYLVLAQTHILKKNFAKAEEYLQQAAQMDYLN), 963 to 996 (PNVWGLKGHLYFLSGNHSEAKACYERTISFVVDA), 1000 to 1033 (HFIFLRLGLIYLEEKEYEKAKKTYMQACKRSPSC), 1035 to 1066 (TWLGLGIACYRLEELTEAEDALSEANALNNYN), and 1068 to 1100 (EVWAYLALVCLKVGRQLEAEQAYKYMIKLKLKD).

It belongs to the CFAP70 family. As to expression, expressed in testis.

It localises to the cell projection. The protein resides in the cilium. The protein localises to the flagellum. Its subcellular location is the cytoplasm. It is found in the cytoskeleton. It localises to the flagellum basal body. The protein resides in the cilium axoneme. Its function is as follows. Axoneme-binding protein that plays a role in the regulation of ciliary motility and cilium length. This is Cilia- and flagella-associated protein 70 from Homo sapiens (Human).